Reading from the N-terminus, the 65-residue chain is Protein C13 (65 aa).

It belongs to the poxviridae C13 protein family.

The protein is Protein C13 of Vaccinia virus (strain Copenhagen) (VACV).